The following is a 685-amino-acid chain: MTTSFAAAALRDPKLQIPNYHGLRSSSAASSLSRNALSVPSSTRSSSLIRAVSTPAKSETATEKKRSKVEIFKEQSNFIRYPLNEDMLTDAPNLSEAATQLIKFHGSYQQYNRDERGSRTYSFMIRTKNPCGKVSNQLYLTMDDLADQFGIGTLRLTTRQTFQLHGVVKKDLKTVMGSIIRNMGSSLGACGDLNRNVLAPAAPIVSKDYLFAQETSENIAALLTPQSGFYYDVWVDGERFMSAEPPEVIQARNDNSHGTNFTDSPEPIYGTQFLPRKFKIAVTVPTDNSVDILTNDIGVVVVTGDGGEPQGFNLYVGGGMGRTHRMETTFPRLAEPLGYVPKEDILYAVKAIVVTQRENGRRDDRRYSRMKYLIDSWGIDKFRNVVEEYYGKKFEPFRSLPEWEFKSYLGWHQQGDGGLFCGLHVDNGRIAGKMKTALREVIEKYHLNVRLTPNQNLILTDIRAAWKRPITTILSQAGLLLPRYVDPLNITAMACPAFPLCPLAITEAERGIPSILKRIRDMFEKVGLKYNESVVVRITGCPNGCARPYMAELGLVGDGPNSYQIWLGGSSNQTSIARSFMDKVKPQDLEKVLEPLFYHWKQKRQSKESFGDFTVRLGFEKLKEFIEKWEGPAVPPTRHNLKLFTDKDTYEAMDGLAKLQNKNAHQLAMEVVRNYIASNLNGKGE.

The N-terminal 51 residues, 1–51 (MTTSFAAAALRDPKLQIPNYHGLRSSSAASSLSRNALSVPSSTRSSSLIRA), are a transit peptide targeting the chloroplast. [4Fe-4S] cluster-binding residues include C495, C501, C541, and C545. Residue C545 participates in siroheme binding.

This sequence belongs to the nitrite and sulfite reductase 4Fe-4S domain family. In terms of assembly, monomer. Interacts with ferredoxin. The cofactor is siroheme. Requires [4Fe-4S] cluster as cofactor. In terms of processing, phosphorylated; this phosphorylation reduces DNA-binding. In terms of tissue distribution, expressed in leaves, stems, and roots.

The protein resides in the plastid. It is found in the chloroplast stroma. It localises to the chloroplast nucleoid. Its subcellular location is the plastid stroma. The enzyme catalyses hydrogen sulfide + 6 oxidized [2Fe-2S]-[ferredoxin] + 3 H2O = sulfite + 6 reduced [2Fe-2S]-[ferredoxin] + 7 H(+). In terms of biological role, essential protein with sulfite reductase activity required in assimilatory sulfate reduction pathway during both primary and secondary metabolism and thus involved in development and growth. DNA-binding protein that binds to both double-stranded and single-stranded DNA without significant sequence specificity to reversibly repress the transcriptional activity of chloroplast nucleoids by promoting DNA compaction and possibly regulate DNA replication. The sequence is that of Sulfite reductase [ferredoxin], chloroplastic (SIR) from Pisum sativum (Garden pea).